We begin with the raw amino-acid sequence, 654 residues long: tRNA 5-methylaminomethyl-2-thiouridine biosynthesis bifunctional protein MnmC (654 aa).

The tRNA (mnm(5)s(2)U34)-methyltransferase stretch occupies residues M1–T236. Positions I262–K654 are FAD-dependent cmnm(5)s(2)U34 oxidoreductase.

This sequence in the N-terminal section; belongs to the methyltransferase superfamily. tRNA (mnm(5)s(2)U34)-methyltransferase family. It in the C-terminal section; belongs to the DAO family. The cofactor is FAD.

It is found in the cytoplasm. It carries out the reaction 5-aminomethyl-2-thiouridine(34) in tRNA + S-adenosyl-L-methionine = 5-methylaminomethyl-2-thiouridine(34) in tRNA + S-adenosyl-L-homocysteine + H(+). Functionally, catalyzes the last two steps in the biosynthesis of 5-methylaminomethyl-2-thiouridine (mnm(5)s(2)U) at the wobble position (U34) in tRNA. Catalyzes the FAD-dependent demodification of cmnm(5)s(2)U34 to nm(5)s(2)U34, followed by the transfer of a methyl group from S-adenosyl-L-methionine to nm(5)s(2)U34, to form mnm(5)s(2)U34. The sequence is that of tRNA 5-methylaminomethyl-2-thiouridine biosynthesis bifunctional protein MnmC from Pseudomonas entomophila (strain L48).